Consider the following 702-residue polypeptide: Ribosomal RNA large subunit methyltransferase K/L (702 aa).

The THUMP domain maps to 43–154 (LIYQSLMWSR…KETASIALDL (112 aa)).

This sequence belongs to the methyltransferase superfamily. RlmKL family.

It is found in the cytoplasm. It catalyses the reaction guanosine(2445) in 23S rRNA + S-adenosyl-L-methionine = N(2)-methylguanosine(2445) in 23S rRNA + S-adenosyl-L-homocysteine + H(+). The catalysed reaction is guanosine(2069) in 23S rRNA + S-adenosyl-L-methionine = N(2)-methylguanosine(2069) in 23S rRNA + S-adenosyl-L-homocysteine + H(+). Specifically methylates the guanine in position 2445 (m2G2445) and the guanine in position 2069 (m7G2069) of 23S rRNA. This chain is Ribosomal RNA large subunit methyltransferase K/L, found in Salmonella paratyphi B (strain ATCC BAA-1250 / SPB7).